Reading from the N-terminus, the 57-residue chain is DNA-directed RNA polymerase subunit Rpo6 (57 aa).

It belongs to the archaeal Rpo6/eukaryotic RPB6 RNA polymerase subunit family. In terms of assembly, part of the RNA polymerase complex.

Its subcellular location is the cytoplasm. The enzyme catalyses RNA(n) + a ribonucleoside 5'-triphosphate = RNA(n+1) + diphosphate. Functionally, DNA-dependent RNA polymerase (RNAP) catalyzes the transcription of DNA into RNA using the four ribonucleoside triphosphates as substrates. This is DNA-directed RNA polymerase subunit Rpo6 from Haloarcula marismortui (strain ATCC 43049 / DSM 3752 / JCM 8966 / VKM B-1809) (Halobacterium marismortui).